Consider the following 712-residue polypeptide: Solute carrier organic anion transporter family member 1C1 (712 aa).

Topologically, residues 1-43 (MDTSSKENIQLFCKTSVQPVGRPSFKTEYPSSEEKQPCCGELK) are cytoplasmic. The helical transmembrane segment at 44–63 (VFLCALSFVYFAKALAEGYL) threads the bilayer. Over 64–82 (KSTITQIERRFDIPSSLVG) the chain is Extracellular. A helical transmembrane segment spans residues 83–103 (VIDGSFEIGNLLVITFVSYFG). Residues 104–109 (AKLHRP) are Cytoplasmic-facing. A helical membrane pass occupies residues 110-134 (KIIGAGCVIMGVGTLLIAMPQFFME). Residues 135–184 (QYKYERYSPSSNSTLSISPCLLESSSQLPVSVMEKSKSKISNECEVDTSS) lie on the Extracellular side of the membrane. A glycan (N-linked (GlcNAc...) asparagine) is linked at asparagine 146. The helical transmembrane segment at 185–213 (SMWIYVFLGNLLRGIGETPIQPLGIAYLD) threads the bilayer. Residues 214–232 (DFASEDNAAFYIGCVQTVA) lie on the Cytoplasmic side of the membrane. The helical transmembrane segment at 233 to 253 (IIGPIFGFLLGSLCAKLYVDI) threads the bilayer. The Extracellular portion of the chain corresponds to 254–271 (GFVNLDHITITPKDPQWV). The chain crosses the membrane as a helical span at residues 272-296 (GAWWLGYLIAGIISLLAAVPFWYLP). Over 297–348 (KSLPRSQSREDSNSSSEKSKFIIDDHTDYQTPQGENAKIMEMARDFLPSLKN) the chain is Cytoplasmic. Residues 349 to 370 (LFGNPVYFLYLCTSTVQFNSLF) form a helical membrane-spanning segment. At 371 to 390 (GMVTYKPKYIEQQYGQSSSR) the chain is on the extracellular side. A helical membrane pass occupies residues 391 to 414 (ANFVIGLINIPAVALGIFSGGIVM). The Cytoplasmic segment spans residues 415-418 (KKFR). The chain crosses the membrane as a helical span at residues 419 to 442 (ISVCGAAKLYLGSSVFGYLLFLSL). The Extracellular portion of the chain corresponds to 443–554 (FALGCENSDV…NGCPQMFLYF (112 aa)). A Kazal-like domain is found at 470–525 (RALFSDCNSRCKCSETKWEPMCGENGITYVSACLAGCQTSNRSGKNIIFYNCTCVG). Intrachain disulfides connect cysteine 476-cysteine 506, cysteine 482-cysteine 502, and cysteine 491-cysteine 523. N-linked (GlcNAc...) asparagine glycosylation is found at asparagine 510, asparagine 520, and asparagine 533. Residues 555–577 (LVISVITSYTLSLGGIPGYILLL) form a helical membrane-spanning segment. The Cytoplasmic segment spans residues 578–586 (RCIKPQLKS). The helical transmembrane segment at 587-612 (FALGIYTLAIRVLAGIPAPVYFGVLI) threads the bilayer. Residues 613-646 (DTSCLKWGFKRCGSRGSCRLYDSNVFRHIYLGLT) are Extracellular-facing. Residues 647–664 (VILGTVSILLSIAVLFIL) traverse the membrane as a helical segment. Topologically, residues 665–712 (KKNYVSKHRSFITKRERTMVSTRFQKENYTTSDHLLQPNYWPGKETQL) are cytoplasmic.

Belongs to the organo anion transporter (TC 2.A.60) family. Highly expressed in brain and in Leydig cells in testis. Localized in nests of Leydig cells (at protein level). Expressed in choroid plexus (at protein level). Not strongly enriched in cerebral microvessels.

The protein localises to the cell membrane. It catalyses the reaction 3,3',5'-triiodo-L-thyronine(out) = 3,3',5'-triiodo-L-thyronine(in). It carries out the reaction L-thyroxine(out) = L-thyroxine(in). The enzyme catalyses L-thyroxine sulfate(out) = L-thyroxine sulfate(in). Mediates the Na(+)-independent high affinity transport of organic anions such as the thyroid hormones L-thyroxine (T4), L-thyroxine sulfate (T4S), and 3,3',5'-triiodo-L-thyronine (reverse T3, rT3) at the plasma membrane. Regulates T4 levels in different brain regions by transporting T4, and also by serving as an export pump for T4S, which is a source of T4 after hydrolysis by local sulfatases. Increases the access of these substrates to the intracellular sites where they are metabolized by the deiodinases. Other potential substrates, such as triiodothyronine (T3), 17-beta-glucuronosyl estradiol (17beta-estradiol 17-O-(beta-D-glucuronate)), estrone-3-sulfate (E1S) and sulfobromophthalein (BSP) are transported with much lower efficiency. Transports T4 and E1S in a pH-insensitive manner. Facilitates the transport of thyroid hormones across the blood-brain barrier and into glia and neuronal cells in the brain. In Homo sapiens (Human), this protein is Solute carrier organic anion transporter family member 1C1 (SLCO1C1).